Here is a 104-residue protein sequence, read N- to C-terminus: Nucleoid-associated protein Bsph_0039 (104 aa).

Over residues 1 to 12 (MRGMGNMQGMMK) the composition is skewed to low complexity. Residues 1–22 (MRGMGNMQGMMKKMQKMQKEMM) form a disordered region.

The protein belongs to the YbaB/EbfC family. Homodimer.

The protein localises to the cytoplasm. It localises to the nucleoid. Binds to DNA and alters its conformation. May be involved in regulation of gene expression, nucleoid organization and DNA protection. In Lysinibacillus sphaericus (strain C3-41), this protein is Nucleoid-associated protein Bsph_0039.